The following is a 332-amino-acid chain: Lipoyl synthase (332 aa).

Residues C79, C84, C90, C105, C109, C112, and S319 each contribute to the [4Fe-4S] cluster site. In terms of domain architecture, Radical SAM core spans F91–K308.

The protein belongs to the radical SAM superfamily. Lipoyl synthase family. [4Fe-4S] cluster serves as cofactor.

The protein resides in the cytoplasm. The enzyme catalyses [[Fe-S] cluster scaffold protein carrying a second [4Fe-4S](2+) cluster] + N(6)-octanoyl-L-lysyl-[protein] + 2 oxidized [2Fe-2S]-[ferredoxin] + 2 S-adenosyl-L-methionine + 4 H(+) = [[Fe-S] cluster scaffold protein] + N(6)-[(R)-dihydrolipoyl]-L-lysyl-[protein] + 4 Fe(3+) + 2 hydrogen sulfide + 2 5'-deoxyadenosine + 2 L-methionine + 2 reduced [2Fe-2S]-[ferredoxin]. Its pathway is protein modification; protein lipoylation via endogenous pathway; protein N(6)-(lipoyl)lysine from octanoyl-[acyl-carrier-protein]: step 2/2. Functionally, catalyzes the radical-mediated insertion of two sulfur atoms into the C-6 and C-8 positions of the octanoyl moiety bound to the lipoyl domains of lipoate-dependent enzymes, thereby converting the octanoylated domains into lipoylated derivatives. The polypeptide is Lipoyl synthase (Hahella chejuensis (strain KCTC 2396)).